The following is a 222-amino-acid chain: Riboflavin kinase (222 aa).

Positions 1–92 are H-T-H motif-like; it reads MVLAEDLECL…CRLFAHEGGH (92 aa). Positions 93–222 are riboflavin kinase; it reads YTLPGIVISG…DRVNVEVAYD (130 aa). 102–107 is a CDP binding site; it reads GLGEGR. The Mg(2+) site is built by Thr-131 and Asn-133. Positions 188 and 196 each coordinate FMN. 201–204 serves as a coordination point for CDP; the sequence is VGLR.

It belongs to the archaeal riboflavin kinase family. Requires Mg(2+) as cofactor.

It carries out the reaction riboflavin + CTP = CDP + FMN + H(+). It functions in the pathway cofactor biosynthesis; FMN biosynthesis; FMN from riboflavin (CTP route): step 1/1. Functionally, catalyzes the CTP-dependent phosphorylation of riboflavin (vitamin B2) to form flavin mononucleotide (FMN). The polypeptide is Riboflavin kinase (ribK) (Methanoregula boonei (strain DSM 21154 / JCM 14090 / 6A8)).